Reading from the N-terminus, the 287-residue chain is Putative B3 domain-containing protein Os08g0157700 (287 aa).

Residues 17 to 29 (ATEEEEEEEEEEQ) are compositionally biased toward acidic residues. Positions 17-36 (ATEEEEEEEEEEQALGQEPA) are disordered. The TF-B3 DNA-binding region spans 71 to 168 (FDKVVTPSDV…RYFIDYRHCH (98 aa)).

It is found in the nucleus. In Oryza sativa subsp. japonica (Rice), this protein is Putative B3 domain-containing protein Os08g0157700.